The sequence spans 438 residues: Xaa-Pro dipeptidase 2 (438 aa).

Asp-242, Asp-253, His-333, Glu-378, and Glu-414 together coordinate Mn(2+).

The protein belongs to the peptidase M24B family. Bacterial-type prolidase subfamily. Mn(2+) serves as cofactor.

It catalyses the reaction Xaa-L-Pro dipeptide + H2O = an L-alpha-amino acid + L-proline. Splits dipeptides with a prolyl residue in the C-terminal position. This is Xaa-Pro dipeptidase 2 from Idiomarina loihiensis (strain ATCC BAA-735 / DSM 15497 / L2-TR).